The chain runs to 161 residues: Endoribonuclease YbeY (161 aa).

3 residues coordinate Zn(2+): His121, His125, and His131.

The protein belongs to the endoribonuclease YbeY family. The cofactor is Zn(2+).

The protein localises to the cytoplasm. In terms of biological role, single strand-specific metallo-endoribonuclease involved in late-stage 70S ribosome quality control and in maturation of the 3' terminus of the 16S rRNA. This Xanthomonas oryzae pv. oryzae (strain MAFF 311018) protein is Endoribonuclease YbeY.